The primary structure comprises 331 residues: Ferrochelatase (331 aa).

Fe cation contacts are provided by His-187 and Glu-286.

It belongs to the ferrochelatase family.

Its subcellular location is the cytoplasm. It catalyses the reaction heme b + 2 H(+) = protoporphyrin IX + Fe(2+). It participates in porphyrin-containing compound metabolism; protoheme biosynthesis; protoheme from protoporphyrin-IX: step 1/1. In terms of biological role, catalyzes the ferrous insertion into protoporphyrin IX. The chain is Ferrochelatase from Legionella pneumophila (strain Lens).